The sequence spans 216 residues: 3-isopropylmalate dehydratase small subunit (216 aa).

This sequence belongs to the LeuD family. LeuD type 1 subfamily. Heterodimer of LeuC and LeuD.

It carries out the reaction (2R,3S)-3-isopropylmalate = (2S)-2-isopropylmalate. The protein operates within amino-acid biosynthesis; L-leucine biosynthesis; L-leucine from 3-methyl-2-oxobutanoate: step 2/4. In terms of biological role, catalyzes the isomerization between 2-isopropylmalate and 3-isopropylmalate, via the formation of 2-isopropylmaleate. This chain is 3-isopropylmalate dehydratase small subunit, found in Polaromonas sp. (strain JS666 / ATCC BAA-500).